Consider the following 793-residue polypeptide: von Willebrand factor A domain-containing protein 5A (793 aa).

The region spanning 1–131 (MEHHCGLITS…KVAVTLRYVQ (131 aa)) is the VIT domain. One can recognise a VWFA domain in the interval 281–469 (EFVFLMDRSG…FALQCAVDNI (189 aa)). A Phosphotyrosine modification is found at Y622.

Its function is as follows. May play a role in tumorigenesis as a tumor suppressor. Altered expression of this protein and disruption of the molecular pathway it is involved in may contribute directly to or modify tumorigenesis. This is von Willebrand factor A domain-containing protein 5A (Vwa5a) from Mus musculus (Mouse).